Here is a 581-residue protein sequence, read N- to C-terminus: Moesin/ezrin/radixin homolog 1 (581 aa).

The 291-residue stretch at 8-298 (MNVRVTTMDA…GNHELYMRRR (291 aa)) folds into the FERM domain. The segment at 452-519 (QVAKGSRAAA…EERRTLAERN (68 aa)) is disordered. Over residues 459 to 469 (AAAALQAATTT) the composition is skewed to low complexity. Over residues 477 to 486 (EEEENEEELI) the composition is skewed to acidic residues. A compositionally biased stretch (basic and acidic residues) spans 495-519 (FSKDFDTDEHIKDPVEERRTLAERN). A Phosphothreonine modification is found at T562.

In terms of assembly, interacts with cytoskeletal actin.

The protein localises to the cell junction. It is found in the adherens junction. The protein resides in the cell projection. It localises to the microvillus. Its subcellular location is the rhabdomere. The protein localises to the cell membrane. It is found in the cytoplasm. The protein resides in the cytoskeleton. Its function is as follows. Involved in connections of major cytoskeletal structures to the plasma membrane. This is Moesin/ezrin/radixin homolog 1 from Anopheles gambiae (African malaria mosquito).